The chain runs to 199 residues: 3-isopropylmalate dehydratase small subunit (199 aa).

It belongs to the LeuD family. LeuD type 1 subfamily. In terms of assembly, heterodimer of LeuC and LeuD.

The enzyme catalyses (2R,3S)-3-isopropylmalate = (2S)-2-isopropylmalate. The protein operates within amino-acid biosynthesis; L-leucine biosynthesis; L-leucine from 3-methyl-2-oxobutanoate: step 2/4. Catalyzes the isomerization between 2-isopropylmalate and 3-isopropylmalate, via the formation of 2-isopropylmaleate. In Aeromonas hydrophila subsp. hydrophila (strain ATCC 7966 / DSM 30187 / BCRC 13018 / CCUG 14551 / JCM 1027 / KCTC 2358 / NCIMB 9240 / NCTC 8049), this protein is 3-isopropylmalate dehydratase small subunit.